The following is a 476-amino-acid chain: Glycogen synthase (476 aa).

Lysine 15 contributes to the ADP-alpha-D-glucose binding site.

Belongs to the glycosyltransferase 1 family. Bacterial/plant glycogen synthase subfamily.

The enzyme catalyses [(1-&gt;4)-alpha-D-glucosyl](n) + ADP-alpha-D-glucose = [(1-&gt;4)-alpha-D-glucosyl](n+1) + ADP + H(+). The protein operates within glycan biosynthesis; glycogen biosynthesis. Functionally, synthesizes alpha-1,4-glucan chains using ADP-glucose. This chain is Glycogen synthase, found in Ligilactobacillus salivarius (strain UCC118) (Lactobacillus salivarius).